The following is a 347-amino-acid chain: MKDERLVQRKNDHLDIVLDPRRAVTQASAGFERWRFTHCALPELNFSDITLETTFLNRQLQAPLLISSMTGGVERSRHINRHLAEAAQVLKIAMGVGSQRVAIESDAGLGLDKTLRQLAPDVPLLANLGAAQLTGRKGIDYARRAVEMIEADALIVHLNPLQEALQPGGDRDWRGRLAAIETLVRELPVPLVVKEVGAGISRTVAGQLIDAGVTVIDVAGAGGTSWAAVEGERAATEQQRSVANVFADWGIPTAEALVDIAEAWPQMPLIASGGIKNGVDAAKALRLGACMVGQAAAVLGSAGVSTEKVIDHFNVIIEQLRVACFCTGSRSLSDLKQADIRYVRDTP.

9 to 10 serves as a coordination point for substrate; it reads RK. FMN contacts are provided by residues S67, 68-70, S98, and N127; that span reads SMT. A substrate-binding site is contributed by 98-100; it reads SQR. Residue Q162 participates in substrate binding. Residue E163 participates in Mg(2+) binding. FMN is bound by residues K194, T224, 274–276, and 295–296; these read GIK and AA.

It belongs to the IPP isomerase type 2 family. Homooctamer. Dimer of tetramers. It depends on FMN as a cofactor. NADPH serves as cofactor. Mg(2+) is required as a cofactor.

The protein localises to the cytoplasm. It carries out the reaction isopentenyl diphosphate = dimethylallyl diphosphate. Involved in the biosynthesis of isoprenoids. Catalyzes the 1,3-allylic rearrangement of the homoallylic substrate isopentenyl (IPP) to its allylic isomer, dimethylallyl diphosphate (DMAPP). The polypeptide is Isopentenyl-diphosphate delta-isomerase (Pseudescherichia vulneris (Escherichia vulneris)).